Reading from the N-terminus, the 397-residue chain is MGFRTLDDVDVTGKRVLVRVDFNVPMSQGKVCDETRLKRHKETLLELQKRGAKLILLSHCGRPKGQGEPEFSLRPVVRVLEKIINQPVAFAPDCVGVAAQTAIEALQNGGLLLLENVRFHPGEEKNDCSFAEALAHNGDLYVNDAFSVSHRAHASVEGITHLLPSYAGRSLQCELQALEKGLDNPKRPVVALVGGAKVSSKLFVLNHLVEKVDYLVIGGGMANSFLAAQGVHIGKSLCEHALMQTIKKVIEKAQEYQCTLLLPVDAVVGFRFEKGAPHRLYDIGDIPDDGMILDIGTRSIAHINEVIDKAATLVWNGPLGVFEMSPFDQGTIAVARHAAECSLTGKCVSIAGGGDTVFALNHAGVANDFTYLSTAGGAFLEWMEGKVLPGIFALRQA.

Residues 21 to 23 (DFN), Arg36, 59 to 62 (HCGR), Arg118, and Arg151 contribute to the substrate site. Residues Lys201, Glu323, and 353 to 356 (GGDT) contribute to the ATP site.

It belongs to the phosphoglycerate kinase family. In terms of assembly, monomer.

It is found in the cytoplasm. It catalyses the reaction (2R)-3-phosphoglycerate + ATP = (2R)-3-phospho-glyceroyl phosphate + ADP. It functions in the pathway carbohydrate degradation; glycolysis; pyruvate from D-glyceraldehyde 3-phosphate: step 2/5. This is Phosphoglycerate kinase from Bartonella quintana (strain Toulouse) (Rochalimaea quintana).